A 580-amino-acid chain; its full sequence is NADH-quinone oxidoreductase subunit C/D (580 aa).

Residues methionine 1 to phenylalanine 171 form an NADH dehydrogenase I subunit C region. Positions glutamate 195 to arginine 580 are NADH dehydrogenase I subunit D.

It in the N-terminal section; belongs to the complex I 30 kDa subunit family. The protein in the C-terminal section; belongs to the complex I 49 kDa subunit family. As to quaternary structure, NDH-1 is composed of 13 different subunits. Subunits NuoB, CD, E, F, and G constitute the peripheral sector of the complex.

It localises to the cell inner membrane. The enzyme catalyses a quinone + NADH + 5 H(+)(in) = a quinol + NAD(+) + 4 H(+)(out). In terms of biological role, NDH-1 shuttles electrons from NADH, via FMN and iron-sulfur (Fe-S) centers, to quinones in the respiratory chain. The immediate electron acceptor for the enzyme in this species is believed to be ubiquinone. Couples the redox reaction to proton translocation (for every two electrons transferred, four hydrogen ions are translocated across the cytoplasmic membrane), and thus conserves the redox energy in a proton gradient. This Cereibacter sphaeroides (strain KD131 / KCTC 12085) (Rhodobacter sphaeroides) protein is NADH-quinone oxidoreductase subunit C/D.